Consider the following 355-residue polypeptide: Nuclear hormone receptor family member nhr-127 (355 aa).

Residues 10 to 86 constitute a DNA-binding region (nuclear receptor); sequence SIPCEVCKNQ…AGMKAEKIQK (77 aa). 2 NR C4-type zinc fingers span residues 13-33 and 49-69; these read CEVC…CGAC and CKDG…CRYC. In terms of domain architecture, NR LBD spans 126–355; it reads NPHNASEGCS…IVQIVQNNFY (230 aa).

The protein belongs to the nuclear hormone receptor family.

The protein resides in the nucleus. In terms of biological role, orphan nuclear receptor. May play a role in modulation of lifespan and immunity. This is Nuclear hormone receptor family member nhr-127 (nhr-127) from Caenorhabditis elegans.